The primary structure comprises 308 residues: Ribosomal RNA large subunit methyltransferase F (308 aa).

Residues 190 to 212 (DSAASARAGSERKRRNLGQDKND) are disordered.

Belongs to the methyltransferase superfamily. METTL16/RlmF family.

It is found in the cytoplasm. The enzyme catalyses adenosine(1618) in 23S rRNA + S-adenosyl-L-methionine = N(6)-methyladenosine(1618) in 23S rRNA + S-adenosyl-L-homocysteine + H(+). Specifically methylates the adenine in position 1618 of 23S rRNA. The sequence is that of Ribosomal RNA large subunit methyltransferase F from Citrobacter koseri (strain ATCC BAA-895 / CDC 4225-83 / SGSC4696).